The following is a 156-amino-acid chain: 6,7-dimethyl-8-ribityllumazine synthase (156 aa).

5-amino-6-(D-ribitylamino)uracil contacts are provided by residues phenylalanine 22, 57-59, and 81-83; these read AVE and SVI. 86–87 lines the (2S)-2-hydroxy-3-oxobutyl phosphate pocket; that stretch reads GT. The Proton donor role is filled by histidine 89. Phenylalanine 114 contacts 5-amino-6-(D-ribitylamino)uracil. Residue arginine 128 coordinates (2S)-2-hydroxy-3-oxobutyl phosphate.

Belongs to the DMRL synthase family. As to quaternary structure, forms an icosahedral capsid composed of 60 subunits, arranged as a dodecamer of pentamers.

It carries out the reaction (2S)-2-hydroxy-3-oxobutyl phosphate + 5-amino-6-(D-ribitylamino)uracil = 6,7-dimethyl-8-(1-D-ribityl)lumazine + phosphate + 2 H2O + H(+). Its pathway is cofactor biosynthesis; riboflavin biosynthesis; riboflavin from 2-hydroxy-3-oxobutyl phosphate and 5-amino-6-(D-ribitylamino)uracil: step 1/2. Functionally, catalyzes the formation of 6,7-dimethyl-8-ribityllumazine by condensation of 5-amino-6-(D-ribitylamino)uracil with 3,4-dihydroxy-2-butanone 4-phosphate. This is the penultimate step in the biosynthesis of riboflavin. This chain is 6,7-dimethyl-8-ribityllumazine synthase, found in Vibrio vulnificus (strain CMCP6).